The chain runs to 473 residues: MFS transporter prlG (473 aa).

A compositionally biased stretch (basic and acidic residues) spans 1–12 (MSSTDAEAKNEE). The disordered stretch occupies residues 1–27 (MSSTDAEAKNEEAVDWEGPDDPENPRN). The span at 13 to 22 (AVDWEGPDDP) shows a compositional bias: acidic residues. The next 11 helical transmembrane spans lie at 37–57 (VLLVSSFTLYSNLAAVMFAPG), 71–91 (IVASLTVSIYILGYVFGPFLL), 101–121 (LIIYHICNAVYIAFTIGCALS), 125–145 (AMFLVFRFICGCAASAPMAIG), 163–183 (ALFGLGPLLGPVIGPVVGGFV), 191–211 (WTFWLVLILAGVVSLLALVLM), 266–286 (PIVFLLSVYCAFMFGLTYLLF), 305–325 (GLAYLGLGVGMIISIGLFAVL), 345–365 (LILMIWSSPLVPIGFFWYGWS), 372–392 (WIVPILGTSVIGLGAFLILMP), and 409–429 (ALAANTVLRSLFGAVLPLAGP).

This sequence belongs to the major facilitator superfamily.

The protein resides in the cell membrane. Its function is as follows. Efflux pump that might be required for efficient secretion of pyrrolocin or other secondary metabolies produced by the pyrrolocin gene cluster. The sequence is that of MFS transporter prlG from Fungal sp. (strain NRRL 50135).